A 97-amino-acid polypeptide reads, in one-letter code: Defensin-A2 (97 aa).

The first 19 residues, methionine 1–alanine 19, serve as a signal peptide directing secretion. Positions glutamine 20–arginine 61 are excised as a propeptide. 3 disulfide bridges follow: cysteine 66/cysteine 93, cysteine 68/cysteine 82, and cysteine 72/cysteine 92. A propeptide spanning residues threonine 96–serine 97 is cleaved from the precursor.

Belongs to the alpha-defensin family. As to expression, highly expressed in intestine, expressed at lower levels in spleen, and at very low levels in kidney and lung.

Its subcellular location is the secreted. Has antimicrobial activity. The sequence is that of Defensin-A2 from Ornithorhynchus anatinus (Duckbill platypus).